A 387-amino-acid chain; its full sequence is Odorant receptor 94a (387 aa).

At Met-1–Arg-45 the chain is on the cytoplasmic side. Residues Phe-46–Ile-66 form a helical membrane-spanning segment. Over Ser-67–Gln-75 the chain is Extracellular. A helical transmembrane segment spans residues Val-76 to Tyr-96. Topologically, residues Arg-97 to Trp-133 are cytoplasmic. The chain crosses the membrane as a helical span at residues Phe-134–Leu-154. Topologically, residues Phe-155–Thr-191 are extracellular. A helical transmembrane segment spans residues Cys-192–Leu-212. Residues Tyr-213 to Arg-255 lie on the Cytoplasmic side of the membrane. Residues Ile-256–Gly-276 traverse the membrane as a helical segment. Residues Tyr-277–Gln-290 lie on the Extracellular side of the membrane. Residues Phe-291–Tyr-311 traverse the membrane as a helical segment. The Cytoplasmic portion of the chain corresponds to Gly-312–Ala-362. A helical membrane pass occupies residues Val-363–Leu-383. A glycan (N-linked (GlcNAc...) asparagine) is linked at Asn-384. Topologically, residues Asn-384–Asn-387 are extracellular.

It belongs to the insect chemoreceptor superfamily. Heteromeric odorant receptor channel (TC 1.A.69) family. Or2a subfamily. As to quaternary structure, interacts with Orco. Complexes exist early in the endomembrane system in olfactory sensory neurons (OSNs), coupling these complexes to the conserved ciliary trafficking pathway.

Its subcellular location is the cell membrane. Its function is as follows. Odorant receptor which mediates acceptance or avoidance behavior, depending on its substrates. The odorant receptor repertoire encodes a large collection of odor stimuli that vary widely in identity, intensity, and duration. May form a complex with Orco to form odorant-sensing units, providing sensitive and prolonged odorant signaling and calcium permeability. The sequence is that of Odorant receptor 94a (Or94a) from Drosophila melanogaster (Fruit fly).